A 386-amino-acid chain; its full sequence is Branched-chain-amino-acid aminotransferase, cytosolic (386 aa).

Methionine 1 is modified (N-acetylmethionine). Lysine 222 carries the post-translational modification N6-(pyridoxal phosphate)lysine.

Belongs to the class-IV pyridoxal-phosphate-dependent aminotransferase family. As to quaternary structure, homodimer. The cofactor is pyridoxal 5'-phosphate. As to expression, expressed in brain and kidney. Overexpressed in MYC-induced brain tumors, lymphomas, as well as in a teratocarcinoma cell line.

Its subcellular location is the cytoplasm. The enzyme catalyses L-leucine + 2-oxoglutarate = 4-methyl-2-oxopentanoate + L-glutamate. The catalysed reaction is L-isoleucine + 2-oxoglutarate = (S)-3-methyl-2-oxopentanoate + L-glutamate. It catalyses the reaction L-valine + 2-oxoglutarate = 3-methyl-2-oxobutanoate + L-glutamate. In terms of biological role, catalyzes the first reaction in the catabolism of the essential branched chain amino acids leucine, isoleucine, and valine. This is Branched-chain-amino-acid aminotransferase, cytosolic (Bcat1) from Mus musculus (Mouse).